We begin with the raw amino-acid sequence, 343 residues long: Mas-related G-protein coupled receptor member F (343 aa).

Topologically, residues 1 to 44 (MAGNCSWEAHPGNRNKMCPGLSEAPELYSRGFLTIEQIAMLPPP) are extracellular. N-linked (GlcNAc...) asparagine glycosylation occurs at Asn4. Residues 45-66 (AVMNYIFLLLCLCGLVGNGLVL) form a helical membrane-spanning segment. Residues 67–82 (WFFGFSIKRNPFSIYF) are Cytoplasmic-facing. Residues 83-104 (LHLASADVGYLFSKAVFSILNT) form a helical membrane-spanning segment. Residues 105-123 (GGFLGTFADYIRSVCRVLG) lie on the Extracellular side of the membrane. A helical membrane pass occupies residues 124–144 (LCMFLTGVSLLPAVSAERCAS). The Cytoplasmic portion of the chain corresponds to 145–160 (VIFPAWYWRRRPKRLS). A helical transmembrane segment spans residues 161 to 181 (AVVCALLWVLSLLVTCLHNYF). Topologically, residues 182–198 (CVFLGRGAPGAACRHMD) are extracellular. Residues 199–220 (IFLGILLFLLCCPLMVLPCLAL) traverse the membrane as a helical segment. Residues 221–241 (ILHVECRARRRQRSAKLNHVI) lie on the Cytoplasmic side of the membrane. A helical transmembrane segment spans residues 242–263 (LAMVSVFLVSSIYLGIDWFLFW). The Extracellular portion of the chain corresponds to 264–273 (VFQIPAPFPE). Residues 274-294 (YVTDLCICINSSAKPIVYFLA) form a helical membrane-spanning segment. The Cytoplasmic segment spans residues 295 to 343 (GRDKSQRLWEPLRVVFQRALRDGAELGEAGGSTPNTVTMEMQCPPGNAS). The disordered stretch occupies residues 320–343 (LGEAGGSTPNTVTMEMQCPPGNAS).

It belongs to the G-protein coupled receptor 1 family. Mas subfamily.

The protein resides in the cell membrane. Its function is as follows. Orphan receptor. May bind to a neuropeptide and may regulate nociceptor function and/or development, including the sensation or modulation of pain. The chain is Mas-related G-protein coupled receptor member F (MRGPRF) from Homo sapiens (Human).